The sequence spans 391 residues: Succinyl-diaminopimelate desuccinylase (391 aa).

His-67 is a binding site for Zn(2+). Residue Asp-69 is part of the active site. Zn(2+) is bound at residue Asp-101. Glu-135 serves as the catalytic Proton acceptor. Zn(2+) contacts are provided by Glu-136, Glu-164, and His-353.

It belongs to the peptidase M20A family. DapE subfamily. Homodimer. Zn(2+) is required as a cofactor. The cofactor is Co(2+).

The enzyme catalyses N-succinyl-(2S,6S)-2,6-diaminopimelate + H2O = (2S,6S)-2,6-diaminopimelate + succinate. It participates in amino-acid biosynthesis; L-lysine biosynthesis via DAP pathway; LL-2,6-diaminopimelate from (S)-tetrahydrodipicolinate (succinylase route): step 3/3. Catalyzes the hydrolysis of N-succinyl-L,L-diaminopimelic acid (SDAP), forming succinate and LL-2,6-diaminopimelate (DAP), an intermediate involved in the bacterial biosynthesis of lysine and meso-diaminopimelic acid, an essential component of bacterial cell walls. The chain is Succinyl-diaminopimelate desuccinylase from Rickettsia bellii (strain RML369-C).